The primary structure comprises 458 residues: ATP synthase subunit beta (458 aa).

148–155 contacts ATP; the sequence is GGAGVGKT.

It belongs to the ATPase alpha/beta chains family. F-type ATPases have 2 components, CF(1) - the catalytic core - and CF(0) - the membrane proton channel. CF(1) has five subunits: alpha(3), beta(3), gamma(1), delta(1), epsilon(1). CF(0) has three main subunits: a(1), b(2) and c(9-12). The alpha and beta chains form an alternating ring which encloses part of the gamma chain. CF(1) is attached to CF(0) by a central stalk formed by the gamma and epsilon chains, while a peripheral stalk is formed by the delta and b chains.

The protein resides in the cell inner membrane. It carries out the reaction ATP + H2O + 4 H(+)(in) = ADP + phosphate + 5 H(+)(out). Functionally, produces ATP from ADP in the presence of a proton gradient across the membrane. The catalytic sites are hosted primarily by the beta subunits. The sequence is that of ATP synthase subunit beta from Laribacter hongkongensis (strain HLHK9).